Here is a 380-residue protein sequence, read N- to C-terminus: Actinidain (380 aa).

A signal peptide spans Met1–Ala24. Residues Phe25–Val126 constitute a propeptide, activation peptide. 3 N-linked (GlcNAc...) asparagine glycosylation sites follow: Asn29, Asn81, and Asn111. 3 disulfide bridges follow: Cys148–Cys191, Cys182–Cys224, and Cys282–Cys332. The active site involves Cys151. Active-site residues include His288 and Asn308.

The protein belongs to the peptidase C1 family. Fruit, present in small cells of the outer pericarp of mature fruit, but not large cells.

The enzyme catalyses Specificity close to that of papain.. Its function is as follows. Cysteine protease responsible for the cleavage of kiwellin into kissper and KiTH. The protein is Actinidain of Actinidia deliciosa (Kiwi).